Consider the following 431-residue polypeptide: Histidinol dehydrogenase (431 aa).

The NAD(+) site is built by Tyr-127, Gln-185, and Asn-208. Residues Ser-234, Gln-256, and His-259 each coordinate substrate. Zn(2+)-binding residues include Gln-256 and His-259. Active-site proton acceptor residues include Glu-323 and His-324. Residues His-324, Asp-357, Glu-411, and His-416 each coordinate substrate. Position 357 (Asp-357) interacts with Zn(2+). A Zn(2+)-binding site is contributed by His-416.

Belongs to the histidinol dehydrogenase family. Zn(2+) is required as a cofactor.

It catalyses the reaction L-histidinol + 2 NAD(+) + H2O = L-histidine + 2 NADH + 3 H(+). It participates in amino-acid biosynthesis; L-histidine biosynthesis; L-histidine from 5-phospho-alpha-D-ribose 1-diphosphate: step 9/9. Its function is as follows. Catalyzes the sequential NAD-dependent oxidations of L-histidinol to L-histidinaldehyde and then to L-histidine. This chain is Histidinol dehydrogenase, found in Vibrio vulnificus (strain CMCP6).